Reading from the N-terminus, the 518-residue chain is Cytochrome P450 82E3 (518 aa).

The helical transmembrane segment at 2-22 (VFPVEAIVGLVTFTFLFYFLW) threads the bilayer. A Glycyl lysine isopeptide (Lys-Gly) (interchain with G-Cter in ubiquitin) cross-link involves residue Lys254. Residue Cys458 coordinates heme.

The protein belongs to the cytochrome P450 family. CYP82E2 subfamily. Heme is required as a cofactor. In terms of tissue distribution, expressed at low levels in green leaves.

It is found in the membrane. It functions in the pathway alkaloid biosynthesis; nicotine biosynthesis. Functionally, no nicotine N-demethylase activity. This Nicotiana tabacum (Common tobacco) protein is Cytochrome P450 82E3.